The chain runs to 1079 residues: Isoleucine--tRNA ligase (1079 aa).

The 'HIGH' region motif lies at 53 to 63; sequence PFANGLPHYGH. Positions 611–615 match the 'KMSKS' region motif; that stretch reads KLSKR. Lysine 614 lines the ATP pocket.

It belongs to the class-I aminoacyl-tRNA synthetase family. IleS type 2 subfamily. In terms of assembly, monomer. Requires Zn(2+) as cofactor.

It localises to the cytoplasm. The enzyme catalyses tRNA(Ile) + L-isoleucine + ATP = L-isoleucyl-tRNA(Ile) + AMP + diphosphate. Its function is as follows. Catalyzes the attachment of isoleucine to tRNA(Ile). As IleRS can inadvertently accommodate and process structurally similar amino acids such as valine, to avoid such errors it has two additional distinct tRNA(Ile)-dependent editing activities. One activity is designated as 'pretransfer' editing and involves the hydrolysis of activated Val-AMP. The other activity is designated 'posttransfer' editing and involves deacylation of mischarged Val-tRNA(Ile). The polypeptide is Isoleucine--tRNA ligase (Rickettsia canadensis (strain McKiel)).